The chain runs to 770 residues: MAMGKYSRVDGKKSSGYGLTITIVLIVSLCLVGAWMFMSSWSAPTESIDFSANERTKDVDTTKSDFKSEEVDRGSKSFPDEKNEETEVVTETNEEKTDPEKSGEENSGEKTESAEERKEFDDKNGDGDRKNGDGEKDTESESDETKQKEKTQLEESSEENKSEDSNGTEENAGESEENTEKKSEENAGETEESTEKSKDVFPAGDQAEITKESSTGSGAWSTQLVESQNEKKAQVSSIKWKVCNVTAGPDYIPCLDNWQAIRKLHSTKHYEHRERHCPEESPRCLVSLPEGYKRSIKWPKSREKIWYTNIPHTKLAEVKGHQNWVKMSGEYLTFPGGGTQFKNGALHYIDFLQESYPDIAWGNRTRVILDVGCGVASFGGYLFDRDVLALSFAPKDEHEAQVQFALERGIPAMSNVMGTKRLPFPGSVFDLIHCARCRVPWHIEGGKLLLELNRALRPGGFFVWSATPVYRKTEEDVGIWKAMSKLTKAMCWELMTIKKDELNEVGAAIYQKPMSNKCYNERSQNEPPLCKDSDDQNAAWNVPLEACIHKVTEDSSKRGAVWPESWPERVETVPQWLDSQEGVYGKPAQEDFTADHERWKTIVSKSYLNGMGIDWSYVRNVMDMRAVYGGFAAALKDLKLWVMNVVPIDSPDTLPIIYERGLFGIYHDWCESFSTYPRTYDLLHADHLFSSLKKRCNLVGVMAEVDRILRPQGTFIVRDDMETIGEIEKMVKSMKWNVRMTHSKDGEGLLSVQKSWWRPTEAETIQSAIA.

Topologically, residues 1-17 (MAMGKYSRVDGKKSSGY) are cytoplasmic. A helical; Signal-anchor for type II membrane protein membrane pass occupies residues 18–38 (GLTITIVLIVSLCLVGAWMFM). Residues 39-770 (SSWSAPTESI…EAETIQSAIA (732 aa)) are Lumenal-facing. 2 stretches are compositionally biased toward basic and acidic residues: residues 54 to 81 (ERTKDVDTTKSDFKSEEVDRGSKSFPDE) and 93 to 164 (NEEK…KSED). The interval 54–223 (ERTKDVDTTK…STGSGAWSTQ (170 aa)) is disordered. Asparagine 160 and asparagine 166 each carry an N-linked (GlcNAc...) asparagine glycan. The span at 212–223 (ESSTGSGAWSTQ) shows a compositional bias: polar residues. N-linked (GlcNAc...) asparagine glycans are attached at residues asparagine 244 and asparagine 363.

It belongs to the methyltransferase superfamily.

The protein localises to the golgi apparatus membrane. This is Probable methyltransferase PMT24 from Arabidopsis thaliana (Mouse-ear cress).